A 693-amino-acid polypeptide reads, in one-letter code: Glycine--tRNA ligase beta subunit (693 aa).

Belongs to the class-II aminoacyl-tRNA synthetase family. In terms of assembly, tetramer of two alpha and two beta subunits.

Its subcellular location is the cytoplasm. It catalyses the reaction tRNA(Gly) + glycine + ATP = glycyl-tRNA(Gly) + AMP + diphosphate. The chain is Glycine--tRNA ligase beta subunit from Shouchella clausii (strain KSM-K16) (Alkalihalobacillus clausii).